Reading from the N-terminus, the 171-residue chain is Iron-sulfur cluster assembly protein 1 (171 aa).

The transit peptide at 1 to 55 directs the protein to the mitochondrion; that stretch reads MLRAGGRRLLAPGLRRVLGGGAAAPVAVGGAKAYHERVVDHYENPRNVGSFENDD.

The protein belongs to the NifU family. In terms of assembly, component of the core Fe-S cluster (ISC) assembly machinery. [2Fe-2S] cluster is required as a cofactor.

Its subcellular location is the mitochondrion matrix. Its pathway is cofactor biosynthesis; iron-sulfur cluster biosynthesis. In terms of biological role, scaffold protein for the de novo synthesis of iron-sulfur (Fe-S) clusters within mitochondria, which is required for maturation of both mitochondrial and cytoplasmic [2Fe-2S] and [4Fe-4S] proteins. First, a [2Fe-2S] cluster is transiently assembled on the scaffold protein ISCU (ISU1, ISU2 or ISU3). In a second step, the cluster is released from ISCU, transferred to a glutaredoxin, followed by the formation of mitochondrial [2Fe-2S] proteins, the synthesis of [4Fe-4S] clusters and their target-specific insertion into the recipient apoproteins. Cluster assembly on ISCU depends on the function of the cysteine desulfurase complex NFS1-ISD11, which serves as the sulfur donor for cluster synthesis, the iron-binding protein frataxin as the putative iron donor, and the electron transfer chain comprised of ferredoxin reductase and ferredoxin, which receive their electrons from NADH. In Oryza sativa subsp. japonica (Rice), this protein is Iron-sulfur cluster assembly protein 1.